Reading from the N-terminus, the 118-residue chain is Protein TusC (118 aa).

The protein belongs to the DsrF/TusC family. In terms of assembly, heterohexamer, formed by a dimer of trimers. The hexameric TusBCD complex contains 2 copies each of TusB, TusC and TusD. The TusBCD complex interacts with TusE.

It localises to the cytoplasm. Functionally, part of a sulfur-relay system required for 2-thiolation of 5-methylaminomethyl-2-thiouridine (mnm(5)s(2)U) at tRNA wobble positions. The chain is Protein TusC from Salmonella paratyphi C (strain RKS4594).